Here is a 395-residue protein sequence, read N- to C-terminus: uncharacterized protein (395 aa).

The stretch at 182–238 (KKLEDILSTIAEIEDSIELEKILSLDQFLKSKLSNIKITNNQIDEAKAEFKEMFNKK) forms a coiled coil.

This is an uncharacterized protein from Acanthamoeba polyphaga (Amoeba).